Reading from the N-terminus, the 270-residue chain is Carboxy-terminal domain RNA polymerase II polypeptide A small phosphatase 2 (270 aa).

S5 carries the post-translational modification Phosphoserine. The region spanning 96 to 254 (QDQGRICVVI…LNLIPVFEEL (159 aa)) is the FCP1 homology domain. D106 acts as the 4-aspartylphosphate intermediate in catalysis. The Mg(2+) site is built by D106, D108, and N217. The active-site Proton donor is D108.

Monomer. Interacts with REST. Mg(2+) serves as cofactor. As to expression, expression is restricted to non-neuronal tissues.

It is found in the nucleus. It carries out the reaction O-phospho-L-seryl-[protein] + H2O = L-seryl-[protein] + phosphate. The enzyme catalyses O-phospho-L-threonyl-[protein] + H2O = L-threonyl-[protein] + phosphate. In terms of biological role, preferentially catalyzes the dephosphorylation of 'Ser-5' within the tandem 7 residue repeats in the C-terminal domain (CTD) of the largest RNA polymerase II subunit POLR2A. Negatively regulates RNA polymerase II transcription, possibly by controlling the transition from initiation/capping to processive transcript elongation. Recruited by REST to neuronal genes that contain RE-1 elements, leading to neuronal gene silencing in non-neuronal cells. This chain is Carboxy-terminal domain RNA polymerase II polypeptide A small phosphatase 2 (Ctdsp2), found in Mus musculus (Mouse).